The chain runs to 319 residues: Phosphoribosylformylglycinamidine cyclo-ligase (319 aa).

Belongs to the AIR synthase family.

The protein localises to the cytoplasm. The enzyme catalyses 2-formamido-N(1)-(5-O-phospho-beta-D-ribosyl)acetamidine + ATP = 5-amino-1-(5-phospho-beta-D-ribosyl)imidazole + ADP + phosphate + H(+). It functions in the pathway purine metabolism; IMP biosynthesis via de novo pathway; 5-amino-1-(5-phospho-D-ribosyl)imidazole from N(2)-formyl-N(1)-(5-phospho-D-ribosyl)glycinamide: step 2/2. This chain is Phosphoribosylformylglycinamidine cyclo-ligase, found in Sulfurisphaera tokodaii (strain DSM 16993 / JCM 10545 / NBRC 100140 / 7) (Sulfolobus tokodaii).